A 162-amino-acid polypeptide reads, in one-letter code: Corticoliberin-2 (162 aa).

Positions 1–24 (MRLNFLVTTMALLVAFPPPYECRA) are cleaved as a signal peptide. Positions 25 to 119 (IDSSSNQPVT…ALDSEERERR (95 aa)) are excised as a propeptide. Residues 57 to 79 (LGNRNKNSPRSPPDTYPEASQYS) form a disordered region. A Phenylalanine amide modification is found at phenylalanine 160.

The protein belongs to the sauvagine/corticotropin-releasing factor/urotensin I family.

Its subcellular location is the secreted. In terms of biological role, this hormone from hypothalamus regulates the release of corticotropin from pituitary gland. This Catostomus commersonii (White sucker) protein is Corticoliberin-2 (crf2).